The chain runs to 60 residues: UPF0434 protein YE1549 (60 aa).

It belongs to the UPF0434 family.

The polypeptide is UPF0434 protein YE1549 (Yersinia enterocolitica serotype O:8 / biotype 1B (strain NCTC 13174 / 8081)).